The sequence spans 149 residues: 3-dehydroquinate dehydratase (149 aa).

Catalysis depends on Tyr-22, which acts as the Proton acceptor. The substrate site is built by Asn-73, His-79, and Asp-86. His-99 (proton donor) is an active-site residue. Residues 100 to 101 (LS) and Arg-110 each bind substrate.

This sequence belongs to the type-II 3-dehydroquinase family. Homododecamer.

It carries out the reaction 3-dehydroquinate = 3-dehydroshikimate + H2O. The protein operates within metabolic intermediate biosynthesis; chorismate biosynthesis; chorismate from D-erythrose 4-phosphate and phosphoenolpyruvate: step 3/7. In terms of biological role, catalyzes a trans-dehydration via an enolate intermediate. The protein is 3-dehydroquinate dehydratase of Prochlorococcus marinus (strain SARG / CCMP1375 / SS120).